A 125-amino-acid chain; its full sequence is Putative zinc finger A20 and AN1 domain-containing stress-associated protein 8 (125 aa).

The A20-type zinc-finger motif lies at Thr2–Ser36. Zn(2+) contacts are provided by Cys8, Cys12, Cys24, Cys27, Cys80, Cys82, His96, and Cys98. The AN1-type; degenerate zinc-finger motif lies at Leu61 to Ala106.

May be involved in environmental stress response. The chain is Putative zinc finger A20 and AN1 domain-containing stress-associated protein 8 (SAP8) from Arabidopsis thaliana (Mouse-ear cress).